The sequence spans 290 residues: ATP synthase gamma chain (290 aa).

Belongs to the ATPase gamma chain family. As to quaternary structure, F-type ATPases have 2 components, CF(1) - the catalytic core - and CF(0) - the membrane proton channel. CF(1) has five subunits: alpha(3), beta(3), gamma(1), delta(1), epsilon(1). CF(0) has three main subunits: a, b and c.

The protein resides in the cell inner membrane. Produces ATP from ADP in the presence of a proton gradient across the membrane. The gamma chain is believed to be important in regulating ATPase activity and the flow of protons through the CF(0) complex. This Phenylobacterium zucineum (strain HLK1) protein is ATP synthase gamma chain.